We begin with the raw amino-acid sequence, 61 residues long: Photosystem II reaction center X protein (61 aa).

The chain crosses the membrane as a helical span at residues 26-46; it reads IGSFIAAALLIVVPATAFLIF.

The protein belongs to the PsbX family. Type 2 subfamily. In terms of assembly, PSII consists of a core antenna complex that captures photons, and an electron transfer chain that converts photonic excitation into a charge separation. PSII forms dimeric complexes.

It localises to the cellular thylakoid membrane. Involved in the binding and/or turnover of quinones at the Q(B) site of Photosystem II. The polypeptide is Photosystem II reaction center X protein (Prochlorococcus marinus (strain AS9601)).